The following is a 67-amino-acid chain: Phycobilisome 7.8 kDa linker polypeptide, allophycocyanin-associated, core (67 aa).

In terms of domain architecture, CpcD-like spans Met-1–Ala-56.

The protein belongs to the phycobilisome linker protein family.

It localises to the cellular thylakoid membrane. Its function is as follows. Rod linker protein, associated with allophycocyanin. Linker polypeptides determine the state of aggregation and the location of the disk-shaped phycobiliprotein units within the phycobilisome and modulate their spectroscopic properties in order to mediate a directed and optimal energy transfer. The chain is Phycobilisome 7.8 kDa linker polypeptide, allophycocyanin-associated, core (apcC) from Synechocystis sp. (strain ATCC 27184 / PCC 6803 / Kazusa).